Reading from the N-terminus, the 197-residue chain is Peptidyl-tRNA hydrolase (197 aa).

A tRNA-binding site is contributed by Tyr18. Residue His23 is the Proton acceptor of the active site. TRNA contacts are provided by Tyr68, Asn70, and Asn116.

This sequence belongs to the PTH family. Monomer.

The protein localises to the cytoplasm. The catalysed reaction is an N-acyl-L-alpha-aminoacyl-tRNA + H2O = an N-acyl-L-amino acid + a tRNA + H(+). Hydrolyzes ribosome-free peptidyl-tRNAs (with 1 or more amino acids incorporated), which drop off the ribosome during protein synthesis, or as a result of ribosome stalling. Its function is as follows. Catalyzes the release of premature peptidyl moieties from peptidyl-tRNA molecules trapped in stalled 50S ribosomal subunits, and thus maintains levels of free tRNAs and 50S ribosomes. This Desulfotalea psychrophila (strain LSv54 / DSM 12343) protein is Peptidyl-tRNA hydrolase.